The primary structure comprises 387 residues: S-adenosylmethionine synthase (387 aa).

Residue H16 coordinates ATP. D18 lines the Mg(2+) pocket. E44 provides a ligand contact to K(+). L-methionine-binding residues include E57 and Q100. The tract at residues Q100–E110 is flexible loop. Residues D167–K169, R232–F233, D241, R247–K248, A264, and K268 contribute to the ATP site. An L-methionine-binding site is contributed by D241. An L-methionine-binding site is contributed by K272.

Belongs to the AdoMet synthase family. As to quaternary structure, homotetramer; dimer of dimers. Mg(2+) serves as cofactor. Requires K(+) as cofactor.

It is found in the cytoplasm. The catalysed reaction is L-methionine + ATP + H2O = S-adenosyl-L-methionine + phosphate + diphosphate. The protein operates within amino-acid biosynthesis; S-adenosyl-L-methionine biosynthesis; S-adenosyl-L-methionine from L-methionine: step 1/1. Its function is as follows. Catalyzes the formation of S-adenosylmethionine (AdoMet) from methionine and ATP. The overall synthetic reaction is composed of two sequential steps, AdoMet formation and the subsequent tripolyphosphate hydrolysis which occurs prior to release of AdoMet from the enzyme. The polypeptide is S-adenosylmethionine synthase (Janthinobacterium sp. (strain Marseille) (Minibacterium massiliensis)).